Reading from the N-terminus, the 382-residue chain is 1-deoxy-D-xylulose 5-phosphate reductoisomerase (382 aa).

Residues Thr11, Gly12, Ser13, Ile14, and Asn123 each coordinate NADPH. Position 124 (Lys124) interacts with 1-deoxy-D-xylulose 5-phosphate. Position 125 (Glu125) interacts with NADPH. Asp149 contributes to the Mn(2+) binding site. 4 residues coordinate 1-deoxy-D-xylulose 5-phosphate: Ser150, Glu151, Ser173, and His196. Glu151 serves as a coordination point for Mn(2+). Position 202 (Gly202) interacts with NADPH. Residues Ser209, Asn214, Lys215, and Glu218 each coordinate 1-deoxy-D-xylulose 5-phosphate. Mn(2+) is bound at residue Glu218.

The protein belongs to the DXR family. Mg(2+) is required as a cofactor. Requires Mn(2+) as cofactor.

The catalysed reaction is 2-C-methyl-D-erythritol 4-phosphate + NADP(+) = 1-deoxy-D-xylulose 5-phosphate + NADPH + H(+). Its pathway is isoprenoid biosynthesis; isopentenyl diphosphate biosynthesis via DXP pathway; isopentenyl diphosphate from 1-deoxy-D-xylulose 5-phosphate: step 1/6. Its function is as follows. Catalyzes the NADPH-dependent rearrangement and reduction of 1-deoxy-D-xylulose-5-phosphate (DXP) to 2-C-methyl-D-erythritol 4-phosphate (MEP). This chain is 1-deoxy-D-xylulose 5-phosphate reductoisomerase, found in Phocaeicola vulgatus (strain ATCC 8482 / DSM 1447 / JCM 5826 / CCUG 4940 / NBRC 14291 / NCTC 11154) (Bacteroides vulgatus).